Consider the following 962-residue polypeptide: Putative primase C962R (962 aa).

An SF3 helicase domain is found at 607–775; that stretch reads ELDARLWIMF…PDPNNSYEKK (169 aa). Residue 636–643 participates in ATP binding; it reads GGGCNGKT.

The protein belongs to the asfivirus helicase C962R family.

This African swine fever virus (isolate Pig/Kenya/KEN-50/1950) (ASFV) protein is Putative primase C962R.